We begin with the raw amino-acid sequence, 512 residues long: Mesoderm induction early response protein 1 (512 aa).

Low complexity predominate over residues 1 to 16 (MAEPSVESSSPGGSAT). Disordered stretches follow at residues 1-63 (MAEP…REGD) and 75-173 (YGST…EDYI). The residue at position 10 (Ser10) is a Phosphoserine. The segment covering 17–36 (SDDHEFDPSADMLVHDFDDE) has biased composition (basic and acidic residues). Composition is skewed to acidic residues over residues 37–46 (RTLEEEEMME) and 83–105 (EEDEEEEEEEEEGEDDEDADNDD). A compositionally biased stretch (polar residues) spans 129–144 (QSSNDDPSQSVASQDA). Ser141 carries the post-translational modification Phosphoserine. Phosphotyrosine is present on Tyr155. 2 positions are modified to phosphoserine: Ser160 and Ser166. Residues 160–173 (SEVEEESEEDEDYI) show a composition bias toward acidic residues. The 99-residue stretch at 180–278 (KEIMVGSMFQ…EALRRLRFNV (99 aa)) folds into the ELM2 domain. Positions 180-284 (KEIMVGSMFQ…RFNVKAAREE (105 aa)) are interaction with HDAC1. Residue Lys239 forms a Glycyl lysine isopeptide (Lys-Gly) (interchain with G-Cter in SUMO2) linkage. Residues 283–335 (EELSVWTEEECRNFEQGLKAYGKDFHLIQANKVRTRSVGECVAFYYMWKKSER) enclose the SANT domain. Residues 366 to 512 (ESESAASSRA…KFEELENTDD (147 aa)) form a disordered region. Residues Ser367, Ser369, and Ser377 each carry the phosphoserine modification. Over residues 396–409 (TVSTANQNGVSSNG) the composition is skewed to polar residues. Basic and acidic residues predominate over residues 414–423 (LNKEEVKVEG). Lys420 is covalently cross-linked (Glycyl lysine isopeptide (Lys-Gly) (interchain with G-Cter in SUMO2)). At Thr448 the chain carries Phosphothreonine. Over residues 462 to 475 (ARNENDFDEKSERP) the composition is skewed to basic and acidic residues. A compositionally biased stretch (polar residues) spans 482 to 494 (NSNGKESPGSSEF). Residues Ser483, Ser488, and Ser491 each carry the phosphoserine modification.

As to quaternary structure, interacts with HDAC1. Part of a complex containing at least CDYL, MIER1, MIER2, HDAC1 and HDAC2. In terms of tissue distribution, ubiquitously expressed, but at very low levels. However, consistent level of expression are observed in heart, testis, thyroid, ovary and adrenal gland. Transcripts are up-regulated in breast carcinoma cell lines and tumor.

The protein localises to the nucleus. It localises to the cytoplasm. Transcriptional repressor regulating the expression of a number of genes including SP1 target genes. Probably functions through recruitment of HDAC1 a histone deacetylase involved in chromatin silencing. This chain is Mesoderm induction early response protein 1 (MIER1), found in Homo sapiens (Human).